Here is a 562-residue protein sequence, read N- to C-terminus: Sulfite reductase [NADPH] hemoprotein beta-component (562 aa).

The [4Fe-4S] cluster site is built by C426, C432, C471, and C475. C475 serves as a coordination point for siroheme.

The protein belongs to the nitrite and sulfite reductase 4Fe-4S domain family. Alpha(8)-beta(8). The alpha component is a flavoprotein, the beta component is a hemoprotein. Siroheme serves as cofactor. Requires [4Fe-4S] cluster as cofactor.

The catalysed reaction is hydrogen sulfide + 3 NADP(+) + 3 H2O = sulfite + 3 NADPH + 4 H(+). It functions in the pathway sulfur metabolism; hydrogen sulfide biosynthesis; hydrogen sulfide from sulfite (NADPH route): step 1/1. In terms of biological role, component of the sulfite reductase complex that catalyzes the 6-electron reduction of sulfite to sulfide. This is one of several activities required for the biosynthesis of L-cysteine from sulfate. This is Sulfite reductase [NADPH] hemoprotein beta-component from Shewanella denitrificans (strain OS217 / ATCC BAA-1090 / DSM 15013).